The sequence spans 322 residues: RING finger protein 113B (322 aa).

The interval Lys-24 to Val-92 is disordered. Positions Ser-46–Pro-60 are enriched in low complexity. Residues Asp-190–Ser-218 form a C3H1-type zinc finger. The RING-type zinc finger occupies Cys-256–Asp-294.

The chain is RING finger protein 113B (RNF113B) from Homo sapiens (Human).